Reading from the N-terminus, the 259-residue chain is UPF0246 protein NMA1114 (259 aa).

It belongs to the UPF0246 family.

The chain is UPF0246 protein NMA1114 from Neisseria meningitidis serogroup A / serotype 4A (strain DSM 15465 / Z2491).